The chain runs to 221 residues: 2-phospho-L-lactate guanylyltransferase (221 aa).

The protein belongs to the CofC family. As to quaternary structure, homodimer.

It carries out the reaction (2S)-2-phospholactate + GTP + H(+) = (2S)-lactyl-2-diphospho-5'-guanosine + diphosphate. The protein operates within cofactor biosynthesis; coenzyme F420 biosynthesis. Functionally, guanylyltransferase that catalyzes the activation of (2S)-2-phospholactate (2-PL) as (2S)-lactyl-2-diphospho-5'-guanosine, via the condensation of 2-PL with GTP. It is involved in the biosynthesis of coenzyme F420, a hydride carrier cofactor. The protein is 2-phospho-L-lactate guanylyltransferase of Methanothrix thermoacetophila (strain DSM 6194 / JCM 14653 / NBRC 101360 / PT) (Methanosaeta thermophila).